The primary structure comprises 226 residues: Transmembrane protein 204 (226 aa).

Residues 1–5 (MTVQK) lie on the Cytoplasmic side of the membrane. A helical membrane pass occupies residues 6-26 (LVATAVLVALVSLILNNAAAF). Topologically, residues 27 to 103 (TPNWVYQTLE…LQFDMMRACN (77 aa)) are extracellular. A helical membrane pass occupies residues 104-124 (LVATAALAVGQITFILGLTGL). The Cytoplasmic segment spans residues 125–136 (PLMSPESQCWEE). A helical membrane pass occupies residues 137-157 (AMAAAFQLASFVLVIGLVTFY). Over 158-170 (RIGPYTNLSWSCY) the chain is Extracellular. N164 carries N-linked (GlcNAc...) asparagine glycosylation. Residues 171-191 (LNIGACLLATLAAAMLIWNIL) traverse the membrane as a helical segment. Residues 192 to 226 (HRREDCMAPRVIVISRSLTARFRRGLDNDYVESPC) are Cytoplasmic-facing.

Its subcellular location is the cell junction. It is found in the adherens junction. The protein resides in the cell membrane. In terms of biological role, can influence paracellular permeability. Appears to be involved in cell-cell interactions through adherens. The protein is Transmembrane protein 204 (Tmem204) of Rattus norvegicus (Rat).